Here is a 201-residue protein sequence, read N- to C-terminus: Large ribosomal subunit protein uL4 (201 aa).

The tract at residues 39-72 (KRQGTSAQKSRSEVIGSGKKPWRQKGTGRARAGS) is disordered.

It belongs to the universal ribosomal protein uL4 family. Part of the 50S ribosomal subunit.

Its function is as follows. One of the primary rRNA binding proteins, this protein initially binds near the 5'-end of the 23S rRNA. It is important during the early stages of 50S assembly. It makes multiple contacts with different domains of the 23S rRNA in the assembled 50S subunit and ribosome. Forms part of the polypeptide exit tunnel. The protein is Large ribosomal subunit protein uL4 of Wigglesworthia glossinidia brevipalpis.